A 350-amino-acid chain; its full sequence is Phosphotriesterase-related protein (350 aa).

His22, His24, Glu169, His201, His230, and Asp298 together coordinate a divalent metal cation.

The protein belongs to the metallo-dependent hydrolases superfamily. Phosphotriesterase family. A divalent metal cation is required as a cofactor.

The sequence is that of Phosphotriesterase-related protein from Drosophila willistoni (Fruit fly).